Reading from the N-terminus, the 94-residue chain is Small ribosomal subunit protein bS6 (94 aa).

Belongs to the bacterial ribosomal protein bS6 family.

Its function is as follows. Binds together with bS18 to 16S ribosomal RNA. The polypeptide is Small ribosomal subunit protein bS6 (Alkaliphilus oremlandii (strain OhILAs) (Clostridium oremlandii (strain OhILAs))).